The chain runs to 330 residues: Lymphocyte-specific protein 1 (330 aa).

2 stretches are compositionally biased toward basic and acidic residues: residues 1–20 (MAEAAIDPRCEEQEELHAED) and 37–62 (AREQRQRERERQLQDQDKDKEDDGGH). Disordered stretches follow at residues 1–246 (MAEA…SIEL) and 281–302 (DMSKKSLWEQKGGSKISSTIKS). The segment covering 66-77 (QPGQQTLISLKS) has biased composition (polar residues). Phosphoserine; by CK2 is present on residues Ser77 and Ser78. Over residues 113–135 (QSERPEEKQTEESSHQAKVHLEE) the composition is skewed to basic and acidic residues. Thr166 carries the post-translational modification Phosphothreonine. Residues Ser168, Ser179, Ser180, and Ser184 each carry the phosphoserine modification. Polar residues-rich tracts occupy residues 206 to 215 (VKKSQPTLPI) and 223 to 242 (QQYTQATESSGRTPKLSRQP). A Phosphoserine; by MAPKAPK2 modification is found at Ser243. Residues 291 to 302 (KGGSKISSTIKS) show a composition bias toward low complexity. Lys318 carries the N6-acetyllysine modification.

In terms of processing, phosphorylated by casein kinase II, protein kinase C and MAPKAPK2. Phosphorylation by PKC induces translocation from membrane to cytoplasm. Phosphorylation by MAPKAPK2 may regulate neutrophil chemotaxis. Isoform 1 is expressed in normal mouse B and T-lymphocytes and in transformed B-cells but not (or in smaller amounts) in nine T-lymphoma lines tested. Isoform 2 is expressed in non-lymphoid cell lines (myocytes, stromal cells, fibroblasts).

It is found in the cell membrane. May play a role in mediating neutrophil activation and chemotaxis. The sequence is that of Lymphocyte-specific protein 1 (Lsp1) from Mus musculus (Mouse).